The chain runs to 402 residues: MDTKFDDVLTGEQKLRNFNINFGPQHPAAHGVLRLVLELDGEVVERCDPHIGLLHRGTEKLMETRTYLQNLPYFDRLDYVAPMNQEHAWCLAIERLTGVQVPRRASLIRVLYSEIGRVLNHLLNVTTQAMDVGALTPPLWGFEEREKLMVFYERASGARLHAAYFRPGGVHQDLTPRLIEDIEEWAEHFPKVLDDLDGLLTENRIFKQRNVDIGVVTEKDILDWGFSGVMVRGSGLAWDLRRSQPYECYDEFDFQIPVGKNGDCYDRYLCRMEEMRQSTRIIQQCLAKLRVEKGDVLARGKITPPPRAEMKTSMEALIHHFKLYTEGFHVPAGEVYAAVEAPKGEFGVYLVADGTNRPYRAKIRAPGFLHLQAIDYIAKGHLLADVSAIIGTLDVVFGEIDR.

The protein belongs to the complex I 49 kDa subunit family. As to quaternary structure, NDH-1 is composed of 14 different subunits. Subunits NuoB, C, D, E, F, and G constitute the peripheral sector of the complex.

It localises to the cell inner membrane. The enzyme catalyses a quinone + NADH + 5 H(+)(in) = a quinol + NAD(+) + 4 H(+)(out). NDH-1 shuttles electrons from NADH, via FMN and iron-sulfur (Fe-S) centers, to quinones in the respiratory chain. The immediate electron acceptor for the enzyme in this species is believed to be ubiquinone. Couples the redox reaction to proton translocation (for every two electrons transferred, four hydrogen ions are translocated across the cytoplasmic membrane), and thus conserves the redox energy in a proton gradient. This chain is NADH-quinone oxidoreductase subunit D, found in Cereibacter sphaeroides (strain ATCC 17025 / ATH 2.4.3) (Rhodobacter sphaeroides).